A 119-amino-acid polypeptide reads, in one-letter code: Large ribosomal subunit protein bL20 (119 aa).

Belongs to the bacterial ribosomal protein bL20 family.

Its function is as follows. Binds directly to 23S ribosomal RNA and is necessary for the in vitro assembly process of the 50S ribosomal subunit. It is not involved in the protein synthesizing functions of that subunit. This chain is Large ribosomal subunit protein bL20, found in Buchnera aphidicola subsp. Cinara cedri (strain Cc).